The primary structure comprises 23 residues: Nephrotoxin PsTX-115 (23 aa).

It is found in the secreted. The protein resides in the nematocyst. In terms of biological role, nephrotoxin. When injected intravenously in rats, causes severe destructive glomerular changes. At 24 hours post-injection partial disruption of the glomerular basement membrane, massive thrombus formation in glomerular capillaries, severe mesangiolysis and infiltrating cells were observed in the majority of glomeruli. This chain is Nephrotoxin PsTX-115, found in Phyllodiscus semoni (Night anemone).